Reading from the N-terminus, the 95-residue chain is Co-chaperonin GroES (95 aa).

Belongs to the GroES chaperonin family. Heptamer of 7 subunits arranged in a ring. Interacts with the chaperonin GroEL.

The protein localises to the cytoplasm. Its function is as follows. Together with the chaperonin GroEL, plays an essential role in assisting protein folding. The GroEL-GroES system forms a nano-cage that allows encapsulation of the non-native substrate proteins and provides a physical environment optimized to promote and accelerate protein folding. GroES binds to the apical surface of the GroEL ring, thereby capping the opening of the GroEL channel. The sequence is that of Co-chaperonin GroES from Rickettsia canadensis (strain McKiel).